The following is a 146-amino-acid chain: 3-dehydroquinate dehydratase (146 aa).

Catalysis depends on Tyr-22, which acts as the Proton acceptor. Substrate contacts are provided by Asn-74, His-80, and Asp-87. His-100 acts as the Proton donor in catalysis. Substrate is bound by residues 101–102 (LS) and Arg-111.

Belongs to the type-II 3-dehydroquinase family. As to quaternary structure, homododecamer.

The catalysed reaction is 3-dehydroquinate = 3-dehydroshikimate + H2O. The protein operates within metabolic intermediate biosynthesis; chorismate biosynthesis; chorismate from D-erythrose 4-phosphate and phosphoenolpyruvate: step 3/7. In terms of biological role, catalyzes a trans-dehydration via an enolate intermediate. The chain is 3-dehydroquinate dehydratase from Clostridium perfringens (strain SM101 / Type A).